The following is a 508-amino-acid chain: Proline--tRNA ligase 2 (508 aa).

Belongs to the class-II aminoacyl-tRNA synthetase family. ProS type 3 subfamily. As to quaternary structure, homodimer.

The protein localises to the cytoplasm. It carries out the reaction tRNA(Pro) + L-proline + ATP = L-prolyl-tRNA(Pro) + AMP + diphosphate. In terms of biological role, catalyzes the attachment of proline to tRNA(Pro) in a two-step reaction: proline is first activated by ATP to form Pro-AMP and then transferred to the acceptor end of tRNA(Pro). The chain is Proline--tRNA ligase 2 from Bacillus anthracis.